An 83-amino-acid polypeptide reads, in one-letter code: Putative defensin-like protein 150 (83 aa).

Positions 1-25 are cleaved as a signal peptide; that stretch reads MMGKHIQLSFAILIMFTIFVLGAVG. 4 disulfides stabilise this stretch: Cys-35/Cys-83, Cys-44/Cys-64, Cys-49/Cys-77, and Cys-53/Cys-79.

This sequence belongs to the DEFL family.

It is found in the secreted. The chain is Putative defensin-like protein 150 (LCR32) from Arabidopsis thaliana (Mouse-ear cress).